The sequence spans 463 residues: MSYPGYPPTGYPPFPGYPPAGQESSFPTAGQYPYPSGFPPMGGGAYPPAPSGGYPGAGGYPAPGGYPAPGGYPGALSPGGPPAYPGGQGFGAPPGGAGFSGYPQPPAQSYGGGPAQVPVPGGFPGGQMPSQYPGGQAPYPSQPASMTQGTQGTILPASNFDAMRDAEILRKAMKGFGTDEQAIVDVVSNRSNDQRQQIKAAFKTMYGKDLIKDLKSELSGNMEELILALFMPSTYYDAWSLRKAMQGAGTQERVLIEILCTRTNQEIRDIVRCYQLEFGRDLEKDIRSDTSGHFERLLVSMCQGNRDERQSVNHQMAQEDAQRLYQAGEGRLGTDESCFNMILATRSFPQLKATMEAYSRMANRDLLSSVSREFSGYVESGLKTILQCALNRPAFFAERLYYSMKGAGTDDSTLVRIVVTRSEIDLVQIKQMFTQMYQKTLSTMIASDTSGDYRKLLLAIVGQ.

Residues 1 to 18 (MSYPGYPPTGYPPFPGYP) show a composition bias toward pro residues. Disordered regions lie at residues 1 to 34 (MSYP…QYPY) and 77 to 149 (SPGG…MTQG). The repeat-rich region stretch occupies residues 1 to 143 (MSYPGYPPTG…GGQAPYPSQP (143 aa)). The tract at residues 5–20 (GYPPTGYPPFPGYPPA) is 3 X 5 AA tandem repeats of G-Y-P-P-X. Residues 86–99 (GGQGFGAPPGGAGF) show a composition bias toward gly residues. 4 Annexin repeats span residues 160-231 (FDAM…ALFM), 232-303 (PSTY…SMCQ), 315-387 (QMAQ…TILQ), and 391-462 (NRPA…AIVG). K208 carries the post-translational modification N6-acetyllysine.

This sequence belongs to the annexin family. As to quaternary structure, interacts with PDCD6.

Its function is as follows. Calcium/phospholipid-binding protein which promotes membrane fusion and is involved in exocytosis. The sequence is that of Annexin A7 (Anxa7) from Mus musculus (Mouse).